Here is a 74-residue protein sequence, read N- to C-terminus: Defensin Lc-def (74 aa).

An N-terminal signal peptide occupies residues 1 to 27 (MEKKTVAALSFLFIVLFVAQEIAVTEA). 4 cysteine pairs are disulfide-bonded: Cys30-Cys74, Cys41-Cys62, Cys47-Cys68, and Cys51-Cys70.

The protein localises to the secreted. Its function is as follows. Has antifungal activity against the phytopathogenic fungus A.niger VKM F-2259, but not against A.alternata VKM F-3047. Does not inhibit trypsin or chymotrypsin. The sequence is that of Defensin Lc-def from Lens culinaris subsp. culinaris (Cultivated lentil).